The chain runs to 284 residues: Diaminopimelate epimerase (284 aa).

3 residues coordinate substrate: N20, Q53, and N73. C82 serves as the catalytic Proton donor. Substrate-binding positions include 83–84 (GN), N167, N200, and 218–219 (ER). The active-site Proton acceptor is the C227. Substrate is bound at residue 228 to 229 (GS).

The protein belongs to the diaminopimelate epimerase family. In terms of assembly, homodimer.

The protein localises to the cytoplasm. It carries out the reaction (2S,6S)-2,6-diaminopimelate = meso-2,6-diaminopimelate. The protein operates within amino-acid biosynthesis; L-lysine biosynthesis via DAP pathway; DL-2,6-diaminopimelate from LL-2,6-diaminopimelate: step 1/1. Functionally, catalyzes the stereoinversion of LL-2,6-diaminopimelate (L,L-DAP) to meso-diaminopimelate (meso-DAP), a precursor of L-lysine and an essential component of the bacterial peptidoglycan. The polypeptide is Diaminopimelate epimerase (Xanthomonas axonopodis pv. citri (strain 306)).